Here is a 181-residue protein sequence, read N- to C-terminus: Oligoribonuclease (181 aa).

Residues 8–171 (LIWVDLEMTG…DDIRESIAEL (164 aa)) form the Exonuclease domain. The active site involves Y129.

This sequence belongs to the oligoribonuclease family.

The protein localises to the cytoplasm. Functionally, 3'-to-5' exoribonuclease specific for small oligoribonucleotides. This chain is Oligoribonuclease, found in Aliivibrio fischeri (strain ATCC 700601 / ES114) (Vibrio fischeri).